A 171-amino-acid polypeptide reads, in one-letter code: Large ribosomal subunit protein uL10 (171 aa).

It belongs to the universal ribosomal protein uL10 family. Part of the ribosomal stalk of the 50S ribosomal subunit. The N-terminus interacts with L11 and the large rRNA to form the base of the stalk. The C-terminus forms an elongated spine to which L12 dimers bind in a sequential fashion forming a multimeric L10(L12)X complex.

Functionally, forms part of the ribosomal stalk, playing a central role in the interaction of the ribosome with GTP-bound translation factors. The chain is Large ribosomal subunit protein uL10 from Hyphomonas neptunium (strain ATCC 15444).